The following is a 103-amino-acid chain: Small ribosomal subunit protein uS10 (103 aa).

It belongs to the universal ribosomal protein uS10 family. In terms of assembly, part of the 30S ribosomal subunit.

In terms of biological role, involved in the binding of tRNA to the ribosomes. The polypeptide is Small ribosomal subunit protein uS10 (Marinomonas sp. (strain MWYL1)).